A 152-amino-acid chain; its full sequence is Large ribosomal subunit protein uL22 (152 aa).

This sequence belongs to the universal ribosomal protein uL22 family. As to quaternary structure, part of the 50S ribosomal subunit.

This protein binds specifically to 23S rRNA. It makes multiple contacts with different domains of the 23S rRNA in the assembled 50S subunit and ribosome. In terms of biological role, the globular domain of the protein is located near the polypeptide exit tunnel on the outside of the subunit, while an extended beta-hairpin is found that lines the wall of the exit tunnel in the center of the 70S ribosome. This chain is Large ribosomal subunit protein uL22, found in Cenarchaeum symbiosum (strain A).